Reading from the N-terminus, the 77-residue chain is Cell division topological specificity factor (77 aa).

The protein belongs to the MinE family.

Its function is as follows. Prevents the cell division inhibition by proteins MinC and MinD at internal division sites while permitting inhibition at polar sites. This ensures cell division at the proper site by restricting the formation of a division septum at the midpoint of the long axis of the cell. The polypeptide is Cell division topological specificity factor (Helicobacter pylori (strain P12)).